The following is a 312-amino-acid chain: DNA-directed RNA polymerase subunit alpha (312 aa).

An alpha N-terminal domain (alpha-NTD) region spans residues M1–T226. The tract at residues D243–K312 is alpha C-terminal domain (alpha-CTD).

This sequence belongs to the RNA polymerase alpha chain family. As to quaternary structure, homodimer. The RNAP catalytic core consists of 2 alpha, 1 beta, 1 beta' and 1 omega subunit. When a sigma factor is associated with the core the holoenzyme is formed, which can initiate transcription.

The enzyme catalyses RNA(n) + a ribonucleoside 5'-triphosphate = RNA(n+1) + diphosphate. DNA-dependent RNA polymerase catalyzes the transcription of DNA into RNA using the four ribonucleoside triphosphates as substrates. The protein is DNA-directed RNA polymerase subunit alpha of Streptococcus agalactiae serotype III (strain NEM316).